The following is a 289-amino-acid chain: tRNA dimethylallyltransferase (289 aa).

Gly9 to Thr16 is a binding site for ATP. Thr11 to Thr16 provides a ligand contact to substrate. Residues Asp34–Cys37 form an interaction with substrate tRNA region.

It belongs to the IPP transferase family. In terms of assembly, monomer. Mg(2+) serves as cofactor.

It carries out the reaction adenosine(37) in tRNA + dimethylallyl diphosphate = N(6)-dimethylallyladenosine(37) in tRNA + diphosphate. Functionally, catalyzes the transfer of a dimethylallyl group onto the adenine at position 37 in tRNAs that read codons beginning with uridine, leading to the formation of N6-(dimethylallyl)adenosine (i(6)A). The polypeptide is tRNA dimethylallyltransferase (Campylobacter jejuni subsp. doylei (strain ATCC BAA-1458 / RM4099 / 269.97)).